The following is a 430-amino-acid chain: Enolase (430 aa).

Gln-165 provides a ligand contact to (2R)-2-phosphoglycerate. Glu-207 (proton donor) is an active-site residue. Positions 244, 287, and 314 each coordinate Mg(2+). Residues Lys-339, Arg-368, Ser-369, and Lys-390 each contribute to the (2R)-2-phosphoglycerate site. Catalysis depends on Lys-339, which acts as the Proton acceptor.

The protein belongs to the enolase family. Component of the RNA degradosome, a multiprotein complex involved in RNA processing and mRNA degradation. Mg(2+) serves as cofactor.

The protein resides in the cytoplasm. It localises to the secreted. Its subcellular location is the cell surface. The enzyme catalyses (2R)-2-phosphoglycerate = phosphoenolpyruvate + H2O. It functions in the pathway carbohydrate degradation; glycolysis; pyruvate from D-glyceraldehyde 3-phosphate: step 4/5. In terms of biological role, catalyzes the reversible conversion of 2-phosphoglycerate (2-PG) into phosphoenolpyruvate (PEP). It is essential for the degradation of carbohydrates via glycolysis. This chain is Enolase, found in Stenotrophomonas maltophilia (strain K279a).